Reading from the N-terminus, the 315-residue chain is Periplasmic [NiFeSe] hydrogenase small subunit (315 aa).

The tat-type signal signal peptide spans 1 to 32; sequence MSLSRREFVKLCSAGVAGLGISQIYHPGIVHA. [4Fe-4S] cluster contacts are provided by Cys-50, Cys-53, Cys-158, Cys-196, His-240, Cys-243, Cys-263, Cys-269, Cys-278, Cys-290, Cys-296, and Cys-299.

Belongs to the [NiFe]/[NiFeSe] hydrogenase small subunit family. Heterodimer of a large and a small subunit. The cofactor is [4Fe-4S] cluster. In terms of processing, predicted to be exported by the Tat system. The position of the signal peptide cleavage has been experimentally proven.

It is found in the periplasm. It carries out the reaction H2 + A = AH2. In Desulfomicrobium baculatum (Desulfovibrio baculatus), this protein is Periplasmic [NiFeSe] hydrogenase small subunit.